A 137-amino-acid polypeptide reads, in one-letter code: Active regulator of SIRT1 (137 aa).

At R7 the chain carries Citrulline. Low complexity predominate over residues 14–24 (GAPEAPGAAPG). The interval 14-58 (GAPEAPGAAPGHTKPSQAPMKRTRKAKATQAQKLRNSAKGKVPKS) is disordered. The residue at position 84 (S84) is a Phosphoserine. A disordered region spans residues 96–120 (RQNRGRKACDRPVTKTKKKKKAEGT).

The protein belongs to the AROS family. Part of the small subunit (SSU) processome, composed of more than 70 proteins and the RNA chaperone small nucleolar RNA (snoRNA) U3. Interacts with RPS19; the interaction is direct and mediates the integration of RPS19 in state post-A1. Interacts with SIRT1. Post-translationally, citrullinated by PADI4.

The protein resides in the nucleus. It localises to the nucleolus. Its function is as follows. Part of the small subunit (SSU) processome, first precursor of the small eukaryotic ribosomal subunit. During the assembly of the SSU processome in the nucleolus, many ribosome biogenesis factors, an RNA chaperone and ribosomal proteins associate with the nascent pre-rRNA and work in concert to generate RNA folding, modifications, rearrangements and cleavage as well as targeted degradation of pre-ribosomal RNA by the RNA exosome. Acts as a chaperone that specifically mediates the integration of RPS19 in state post-A1. Direct regulator of SIRT1. Enhances SIRT1-mediated deacetylation of p53/TP53, thereby participating in inhibition of p53/TP53-mediated transcriptional activity. The chain is Active regulator of SIRT1 (RPS19BP1) from Bos taurus (Bovine).